Here is a 161-residue protein sequence, read N- to C-terminus: 18.1 kDa class I heat shock protein (161 aa).

The sHSP domain occupies 45–160 (DVAAFTNARV…QVKSIDISGA (116 aa)).

It belongs to the small heat shock protein (HSP20) family. As to quaternary structure, may form oligomeric structures. Binds to AKR2A.

It localises to the cytoplasm. In Arabidopsis thaliana (Mouse-ear cress), this protein is 18.1 kDa class I heat shock protein (HSP18.1).